A 370-amino-acid chain; its full sequence is Seipin (370 aa).

The signal sequence occupies residues 1–18 (MNILLRLIVFALDPLGLG). Residues 19 to 55 (RRFLIRPAVNLGWNVYDRVRSKADEKVGTVRELVLRL) lie on the Cytoplasmic side of the membrane. The helical transmembrane segment at 56–76 (GLIAFAVVLIIWLAVFMYAAF) threads the bilayer. At 77–251 (YYVYMPAISH…GLRYIMFNWP (175 aa)) the chain is on the lumenal side. A helical membrane pass occupies residues 252-272 (VLSAIVAISTNLFFILVVFLL). The Cytoplasmic portion of the chain corresponds to 273–370 (SWYHWSDAKW…RPTKKTTADH (98 aa)). The segment at 346–370 (KSRSGKRESPDALRKRPTKKTTADH) is disordered. Residues 350–359 (GKRESPDALR) are compositionally biased toward basic and acidic residues.

In terms of tissue distribution, widely expressed, with highest levels detected in fat body, moderate levels detected in salivary gland, midgut and muscle, and weak expression detected in brain.

Its subcellular location is the endoplasmic reticulum membrane. The protein localises to the lipid droplet. Its function is as follows. Acts as a tissue-autonomous lipid modulator, preventing ectopic lipid accumulation in salivary gland (a non-adipose tissue) and in promoting lipid storage in fat tissue. Required for the growth and maturation of small nascent lipid droplets (LDs) into larger mature LDs. In Drosophila melanogaster (Fruit fly), this protein is Seipin.